Reading from the N-terminus, the 158-residue chain is Transcriptional repressor NrdR (158 aa).

The segment at M1–E20 is disordered. A zinc finger spans residues C3–C34. One can recognise an ATP-cone domain in the interval L49 to D139.

The protein belongs to the NrdR family. It depends on Zn(2+) as a cofactor.

In terms of biological role, negatively regulates transcription of bacterial ribonucleotide reductase nrd genes and operons by binding to NrdR-boxes. In Afipia carboxidovorans (strain ATCC 49405 / DSM 1227 / KCTC 32145 / OM5) (Oligotropha carboxidovorans), this protein is Transcriptional repressor NrdR.